The primary structure comprises 81 residues: U10-myrmicitoxin-Mri1b (81 aa).

Residues 1–26 (MRLSYISLTLAIIFVMAIVHAPETEA) form the signal peptide. Residues 27 to 52 (KAYPEADAVAEAIAVGEADAVGVADP) constitute a propeptide that is removed on maturation. Valine amide is present on valine 80.

The protein belongs to the formicidae venom precursor-01 superfamily. As to expression, expressed by the venom gland.

Its subcellular location is the secreted. In terms of biological role, induces paralysis after injection into blowflies (L.caesar), and then death within 24 hours. May have antimicrobial properties, like most ant linear peptides. The protein is U10-myrmicitoxin-Mri1b of Manica rubida (European giant red ant).